The primary structure comprises 184 residues: uncharacterized protein (184 aa).

It belongs to the TorD/DmsD family.

This is an uncharacterized protein from Haemophilus influenzae (strain ATCC 51907 / DSM 11121 / KW20 / Rd).